Reading from the N-terminus, the 113-residue chain is UPF0482 protein YnfB (113 aa).

Positions 1 to 28 are cleaved as a signal peptide; sequence MNYTLSKRLCLTAMLTLAAVVYTTSAFA.

It belongs to the UPF0482 family.

This Salmonella arizonae (strain ATCC BAA-731 / CDC346-86 / RSK2980) protein is UPF0482 protein YnfB.